The sequence spans 309 residues: Peptide methionine sulfoxide reductase MsrA/MsrB (309 aa).

Positions 1–153 (MIYLAGGCFW…PNGYCHIDIN (153 aa)) are peptide methionine sulfoxide reductase A. Cys8 is a catalytic residue. Residues 170 to 293 (ATEIKEKLSA…NSLSITFIPK (124 aa)) enclose the MsrB domain. Cys282 functions as the Nucleophile in the catalytic mechanism.

This sequence in the N-terminal section; belongs to the MsrA Met sulfoxide reductase family. It in the C-terminal section; belongs to the MsrB Met sulfoxide reductase family.

The enzyme catalyses L-methionyl-[protein] + [thioredoxin]-disulfide + H2O = L-methionyl-(S)-S-oxide-[protein] + [thioredoxin]-dithiol. It carries out the reaction [thioredoxin]-disulfide + L-methionine + H2O = L-methionine (S)-S-oxide + [thioredoxin]-dithiol. It catalyses the reaction L-methionyl-[protein] + [thioredoxin]-disulfide + H2O = L-methionyl-(R)-S-oxide-[protein] + [thioredoxin]-dithiol. Its function is as follows. Has an important function as a repair enzyme for proteins that have been inactivated by oxidation. Catalyzes the reversible oxidation-reduction of methionine sulfoxide in proteins to methionine. The sequence is that of Peptide methionine sulfoxide reductase MsrA/MsrB (msrAB) from Streptococcus pyogenes serotype M18 (strain MGAS8232).